The chain runs to 532 residues: Carboxypeptidase Y (532 aa).

Residues methionine 1–alanine 20 form the signal peptide. A propeptide spans isoleucine 21–asparagine 111 (mediates translocation across the endoplasmic reticulum, renders the enzyme inactive during transit, and targets the molecule to the vacuole). A Vacuolar targeting signal motif is present at residues glutamine 24–leucine 27. 2 N-linked (GlcNAc...) (high mannose) asparagine glycosylation sites follow: asparagine 124 and asparagine 198. Cystine bridges form between cysteine 167–cysteine 409, cysteine 304–cysteine 318, cysteine 328–cysteine 351, cysteine 335–cysteine 344, and cysteine 373–cysteine 379. Residue serine 257 is part of the active site. An N-linked (GlcNAc...) (high mannose) asparagine glycan is attached at asparagine 279. The active site involves aspartate 449. Cysteine 452 is a substrate binding site. Asparagine 479 carries N-linked (GlcNAc...) (high mannose) asparagine glycosylation. Histidine 508 is a catalytic residue. Methionine 509 contributes to the substrate binding site.

Belongs to the peptidase S10 family. In terms of processing, enters the endoplasmic reticulum as an inactive zymogen and is modified by four N-linked core oligosaccharides, giving rise to a precursor known as P1 (67 kDa). As P1 transits through the Golgi, extension of its core oligosaccharides leads to the Golgi-modified P2 precursor (69 kDa). P2 is sorted away from secretory proteins at or beyond a late Golgi compartment and is subsequently delivered to the vacuole via a prevacuolar endosome-like compartment. Upon arrival in the vacuole, the N-terminal prosegment of P2 is cleaved by vacuolar proteases to yield the enzymatically active mature vacuolar form of CPY (61 kDa). Post-translationally, the four high mannose core N-glycans found in mature CPY are Man(11-15)GlcNAc(2) at Asn-124, Man(8-12)GlcNAc(2) at Asn-198, Man(9-14)GlcNAc(2) at Asn-279 and phosphorylated Man(12-17)GlcNAc(2) as well as Man(11-16)GlcNAc(2) at Asn-479.

It localises to the vacuole lumen. The catalysed reaction is Release of a C-terminal amino acid with broad specificity.. With respect to regulation, inhibited by ZPCK. In terms of biological role, vacuolar serine-type carboxypeptidase involved in degradation of small peptides. Digests preferentially peptides containing an aliphatic or hydrophobic residue in P1' position, as well as methionine, leucine or phenylalanine in P1 position of ester substrate. Also plays a role in breakdown of the autophagic body and the autophagosome-dependent protein synthesis. Plays a key role in phytochelatin (PC) synthesis from glutathione (GSH) by cleaving the Gly from GSH and form the PC-peptides of the structure (gamma-Glu-Cys)2-Gly. Also involved in resistance to xenobiotics via the degradation of glutathione-S-conjugates. The polypeptide is Carboxypeptidase Y (Saccharomyces cerevisiae (strain ATCC 204508 / S288c) (Baker's yeast)).